We begin with the raw amino-acid sequence, 101 residues long: Pterin-4-alpha-carbinolamine dehydratase (101 aa).

Belongs to the pterin-4-alpha-carbinolamine dehydratase family.

It catalyses the reaction (4aS,6R)-4a-hydroxy-L-erythro-5,6,7,8-tetrahydrobiopterin = (6R)-L-erythro-6,7-dihydrobiopterin + H2O. This chain is Pterin-4-alpha-carbinolamine dehydratase (Pcd), found in Drosophila virilis (Fruit fly).